The sequence spans 315 residues: PIH1 domain-containing protein 2 (315 aa).

This sequence belongs to the PIH1 family.

In Bos taurus (Bovine), this protein is PIH1 domain-containing protein 2 (PIH1D2).